We begin with the raw amino-acid sequence, 368 residues long: tRNA-specific 2-thiouridylase MnmA (368 aa).

Residues glycine 12–serine 19 and methionine 38 contribute to the ATP site. Residues asparagine 98 to aspartate 100 are interaction with target base in tRNA. The active-site Nucleophile is cysteine 103. Cysteines 103 and 200 form a disulfide. Residue glycine 128 participates in ATP binding. An interaction with tRNA region spans residues lysine 150–glutamine 152. Cysteine 200 acts as the Cysteine persulfide intermediate in catalysis. Positions arginine 313–tyrosine 314 are interaction with tRNA.

It belongs to the MnmA/TRMU family. Interacts with TusE.

Its subcellular location is the cytoplasm. It catalyses the reaction S-sulfanyl-L-cysteinyl-[protein] + uridine(34) in tRNA + AH2 + ATP = 2-thiouridine(34) in tRNA + L-cysteinyl-[protein] + A + AMP + diphosphate + H(+). Catalyzes the 2-thiolation of uridine at the wobble position (U34) of tRNA(Lys), tRNA(Glu) and tRNA(Gln), leading to the formation of s(2)U34, the first step of tRNA-mnm(5)s(2)U34 synthesis. Sulfur is provided by IscS, via a sulfur-relay system. Binds ATP and its substrate tRNAs. This is tRNA-specific 2-thiouridylase MnmA from Pectobacterium atrosepticum (strain SCRI 1043 / ATCC BAA-672) (Erwinia carotovora subsp. atroseptica).